A 112-amino-acid polypeptide reads, in one-letter code: Colipase (112 aa).

The N-terminal stretch at 1 to 17 is a signal peptide; sequence MEKVLILLLVALAVAYA. The propeptide at 18-22 is enterostatin, activation peptide; the sequence is VPDPR. Disulfide bonds link Cys34–Cys45, Cys40–Cys56, Cys44–Cys78, Cys66–Cys86, and Cys80–Cys104.

It belongs to the colipase family. Forms a 1:1 stoichiometric complex with pancreatic lipase.

The protein localises to the secreted. Its function is as follows. Colipase is a cofactor of pancreatic lipase. It allows the lipase to anchor itself to the lipid-water interface. Without colipase the enzyme is washed off by bile salts, which have an inhibitory effect on the lipase. Functionally, enterostatin has a biological activity as a satiety signal. The chain is Colipase (CLPS) from Bos taurus (Bovine).